A 203-amino-acid chain; its full sequence is GTP-binding protein ypt1 (203 aa).

GTP contacts are provided by residues 15–23 (GDSGVGKSC), 33–40 (YTESYIST), 63–67 (DTAGQ), 121–124 (NKSD), and 151–153 (SAK). An Effector region motif is present at residues 37 to 45 (YISTIGVDF). Positions 180–203 (NNTKASVNVSPGHGVSNNSSGGCC) are disordered. S-geranylgeranyl cysteine attachment occurs at residues Cys202 and Cys203.

Belongs to the small GTPase superfamily. Rab family.

It localises to the endoplasmic reticulum membrane. It is found in the golgi apparatus membrane. Its subcellular location is the cytoplasm. The protein localises to the preautophagosomal structure membrane. Its activity is regulated as follows. Rab activation is generally mediated by a guanine exchange factor (GEF), while inactivation through hydrolysis of bound GTP is catalyzed by a GTPase activating protein (GAP). The small GTPases Rab are key regulators of intracellular membrane trafficking, from the formation of transport vesicles to their fusion with membranes. Rabs cycle between an inactive GDP-bound form and an active GTP-bound form that is able to recruit to membranes different set of downstream effectors directly responsible for vesicle formation, movement, tethering and fusion. Ypt-1 regulates the trafficking of secretory vesicles from the endoplasmic reticulum (ER) to the Golgi. Plays a role in the initial events of the autophagic vacuole development which take place at specialized regions of the endoplasmic reticulum. Also involved in the recycling of membrane proteins. This is GTP-binding protein ypt1 (ypt-1) from Neurospora crassa (strain ATCC 24698 / 74-OR23-1A / CBS 708.71 / DSM 1257 / FGSC 987).